Consider the following 379-residue polypeptide: UDP-N-acetylglucosamine--N-acetylmuramyl-(pentapeptide) pyrophosphoryl-undecaprenol N-acetylglucosamine transferase (379 aa).

UDP-N-acetyl-alpha-D-glucosamine is bound by residues 17-19 (TGG), Asn128, Arg169, Ser197, and Gln298.

Belongs to the glycosyltransferase 28 family. MurG subfamily.

It localises to the cell inner membrane. The enzyme catalyses di-trans,octa-cis-undecaprenyl diphospho-N-acetyl-alpha-D-muramoyl-L-alanyl-D-glutamyl-meso-2,6-diaminopimeloyl-D-alanyl-D-alanine + UDP-N-acetyl-alpha-D-glucosamine = di-trans,octa-cis-undecaprenyl diphospho-[N-acetyl-alpha-D-glucosaminyl-(1-&gt;4)]-N-acetyl-alpha-D-muramoyl-L-alanyl-D-glutamyl-meso-2,6-diaminopimeloyl-D-alanyl-D-alanine + UDP + H(+). It participates in cell wall biogenesis; peptidoglycan biosynthesis. In terms of biological role, cell wall formation. Catalyzes the transfer of a GlcNAc subunit on undecaprenyl-pyrophosphoryl-MurNAc-pentapeptide (lipid intermediate I) to form undecaprenyl-pyrophosphoryl-MurNAc-(pentapeptide)GlcNAc (lipid intermediate II). This chain is UDP-N-acetylglucosamine--N-acetylmuramyl-(pentapeptide) pyrophosphoryl-undecaprenol N-acetylglucosamine transferase, found in Brucella suis biovar 1 (strain 1330).